Here is a 2066-residue protein sequence, read N- to C-terminus: Kinesin-like protein KIN-12C (2066 aa).

Disordered regions lie at residues 1–41 (MSRN…SQIQ) and 59–116 (RAQH…RVSL). Positions 20–33 (SLSLFSPSRPPLNS) are enriched in low complexity. The span at 67-76 (GPEKKFEVLE) shows a compositional bias: basic and acidic residues. The segment covering 99-109 (EPNSAQSTPTR) has biased composition (polar residues). Positions 168–505 (NVQVLIRLRP…LKFAQRAKLI (338 aa)) constitute a Kinesin motor domain. 249–256 (GQTGSGKT) contributes to the ATP binding site. 3 microtubules-binding regions span residues 375-379 (SSRSH), 406-412 (VDLAGSE), and 454-458 (HVPYR). Coiled-coil stretches lie at residues 1521–1618 (DLKT…VDEI) and 1650–1772 (KIYA…EILL). 2 disordered regions span residues 1803–1823 (SAAETISHKTEKSSTRSRGSS) and 2043–2066 (KYRKTSNNHPSTRTQGQSSGTRYR). A coiled-coil region spans residues 1905 to 2051 (VQRVVEKAQQ…AKYRKTSNNH (147 aa)). The segment covering 2047-2066 (TSNNHPSTRTQGQSSGTRYR) has biased composition (polar residues).

This sequence belongs to the TRAFAC class myosin-kinesin ATPase superfamily. Kinesin family. KIN-12 subfamily. Interacts with TAN. Interacts with RANGAP1. Expressed in tissues enriched in dividing cells, such as root meristems, root primordia, and leaf primordia/young leaves.

The protein localises to the cytoplasm. It is found in the cytoskeleton. The protein resides in the phragmoplast. Its function is as follows. Involved in the spatial control of cytokinesis by a proper phragmoplast guidance. Localizes TAN to the cortical division sites (CDS) during cytokinesis via direct binding. The sequence is that of Kinesin-like protein KIN-12C from Arabidopsis thaliana (Mouse-ear cress).